We begin with the raw amino-acid sequence, 713 residues long: Polyribonucleotide nucleotidyltransferase (713 aa).

Mg(2+)-binding residues include Asp-498 and Asp-504. The 67-residue stretch at 565 to 631 (PRILSLKVPV…RIEDLTREAK (67 aa)) folds into the KH domain. The S1 motif domain maps to 633–701 (GEIYEGTVTR…ERGKIDLIRP (69 aa)).

This sequence belongs to the polyribonucleotide nucleotidyltransferase family. The cofactor is Mg(2+).

The protein resides in the cytoplasm. The enzyme catalyses RNA(n+1) + phosphate = RNA(n) + a ribonucleoside 5'-diphosphate. Functionally, involved in mRNA degradation. Catalyzes the phosphorolysis of single-stranded polyribonucleotides processively in the 3'- to 5'-direction. In Thermus thermophilus (strain ATCC 27634 / DSM 579 / HB8), this protein is Polyribonucleotide nucleotidyltransferase.